The primary structure comprises 423 residues: MFSYSSSDWQRRFDEPEKPSRIIAHHDERGPFAKDRARVLHSAALRRLADKTQVVGPRDGDNPRTRLTHSLEVAQIARGIGTGLGLDADLCEMAGLTHDIGHPPYGHNGEKALAEIAQDCGGFEGNAQTLRILSKLEPKIVDDHDQSYGLNLTRAALDAACKYPRTKTNPDGSVNKKYGCYDEDAHILQWVRQGHEDTSACVEAQAMDFSDDIAYSVHDVEDGIVSGRVHLGVLWDFVELAELAEKGARAFGGTPEALVDAADHLRELPIISAAADFDGSLRGYVDLKAMTSQLVGRYVGAVIEASRAANPTGVFGRSTGQVVVPDQVLAEVTLLKTIAVLYVMDDPTHRQRQDRQRERIYRVYDYLVAGGRGALDPMFRLWWEQAESEAQRQRVIIDNISSMTESRLERVAKQSAELSSFMG.

Positions 66–216 (RLTHSLEVAQ…MDFSDDIAYS (151 aa)) constitute an HD domain.

Belongs to the dGTPase family. Type 2 subfamily.

This Corynebacterium diphtheriae (strain ATCC 700971 / NCTC 13129 / Biotype gravis) protein is Deoxyguanosinetriphosphate triphosphohydrolase-like protein.